Consider the following 405-residue polypeptide: [PIN+] prion protein RNQ1 (405 aa).

Residues Lys5 and Lys84 each participate in a glycyl lysine isopeptide (Lys-Gly) (interchain with G-Cter in ubiquitin) cross-link. Residue Ser143 is modified to Phosphoserine. Disordered stretches follow at residues 149-172 (GNNSQGQGQGQGQGQGQGQGQGQG) and 185-405 (MNSN…QNRY). The segment at 153–402 (QGQGQGQGQG…FSQQNNNGNQ (250 aa)) is prion domain (PrD). Gly residues predominate over residues 155–171 (QGQGQGQGQGQGQGQGQ). Low complexity-rich tracts occupy residues 185–261 (MNSN…QQQG) and 283–353 (TQSN…QQAN). Polar residues-rich tracts occupy residues 358 to 368 (PQQNGQQQSNE) and 375 to 385 (GGNQNSNGQHE). Low complexity predominate over residues 386-405 (SFNFSGNFSQQNNNGNQNRY).

It is found in the cytoplasm. The protein localises to the nucleus. In terms of biological role, transferable epigenetic modifier which forms a prion responsible for the non-Mendelian trait [PIN+]. The native function of the soluble protein is unknown. The protein is [PIN+] prion protein RNQ1 (RNQ1) of Saccharomyces cerevisiae (strain ATCC 204508 / S288c) (Baker's yeast).